Reading from the N-terminus, the 347-residue chain is NADH-ubiquinone oxidoreductase chain 2 (347 aa).

Helical transmembrane passes span 3-23 (PLIF…VMIS), 25-45 (HWLM…PVLM), 59-79 (YFLT…INLL), 96-116 (IIMT…FWVP), 122-142 (VSLT…LSVL), 145-165 (IAPV…IMIG), 178-198 (ILAY…IFNP), 202-222 (LLNL…FMTV), 240-260 (ITTS…LTGF), 276-296 (IILA…YMRL), and 326-346 (LSPL…MMIL).

It belongs to the complex I subunit 2 family. As to quaternary structure, core subunit of respiratory chain NADH dehydrogenase (Complex I) which is composed of 45 different subunits. Interacts with TMEM242.

Its subcellular location is the mitochondrion inner membrane. The enzyme catalyses a ubiquinone + NADH + 5 H(+)(in) = a ubiquinol + NAD(+) + 4 H(+)(out). Core subunit of the mitochondrial membrane respiratory chain NADH dehydrogenase (Complex I) which catalyzes electron transfer from NADH through the respiratory chain, using ubiquinone as an electron acceptor. Essential for the catalytic activity and assembly of complex I. This Peropteryx macrotis (Lesser dog-like bat) protein is NADH-ubiquinone oxidoreductase chain 2.